Reading from the N-terminus, the 280-residue chain is Aspartate/glutamate leucyltransferase (280 aa).

This sequence belongs to the R-transferase family. Bpt subfamily.

Its subcellular location is the cytoplasm. The catalysed reaction is N-terminal L-glutamyl-[protein] + L-leucyl-tRNA(Leu) = N-terminal L-leucyl-L-glutamyl-[protein] + tRNA(Leu) + H(+). The enzyme catalyses N-terminal L-aspartyl-[protein] + L-leucyl-tRNA(Leu) = N-terminal L-leucyl-L-aspartyl-[protein] + tRNA(Leu) + H(+). Functions in the N-end rule pathway of protein degradation where it conjugates Leu from its aminoacyl-tRNA to the N-termini of proteins containing an N-terminal aspartate or glutamate. This is Aspartate/glutamate leucyltransferase from Cereibacter sphaeroides (strain KD131 / KCTC 12085) (Rhodobacter sphaeroides).